A 321-amino-acid polypeptide reads, in one-letter code: Glucokinase (321 aa).

8–13 (GDVGGT) lines the ATP pocket.

The protein belongs to the bacterial glucokinase family.

It is found in the cytoplasm. It carries out the reaction D-glucose + ATP = D-glucose 6-phosphate + ADP + H(+). The sequence is that of Glucokinase from Klebsiella pneumoniae subsp. pneumoniae (strain ATCC 700721 / MGH 78578).